An 801-amino-acid polypeptide reads, in one-letter code: Putative mRNA-capping enzyme P5 (801 aa).

It belongs to the phytoreovirus protein P5 family.

The protein resides in the virion. The protein localises to the host cytoplasm. It carries out the reaction a 5'-end diphospho-ribonucleoside in mRNA + GTP + H(+) = a 5'-end (5'-triphosphoguanosine)-ribonucleoside in mRNA + diphosphate. It participates in mRNA processing; mRNA capping. Functionally, enzyme involved in mRNA capping (Potential). Binds to GTP and might have guanylyltransferase activity. Together with the RNA-directed RNA polymerase P1 and protein P7, forms an transcriptional complex positioned near the channels situated at each of the five-fold vertices of the core. This chain is Putative mRNA-capping enzyme P5, found in Alopecurus aequalis (Barnyard grass).